Reading from the N-terminus, the 387-residue chain is Phosphoglycerate kinase (387 aa).

Substrate contacts are provided by residues 21–23 (DLN), Arg-36, 59–62 (HLGR), Arg-113, and Arg-146. ATP-binding positions include Lys-197, Glu-314, and 340–343 (GGDT).

This sequence belongs to the phosphoglycerate kinase family. Monomer.

It localises to the cytoplasm. The catalysed reaction is (2R)-3-phosphoglycerate + ATP = (2R)-3-phospho-glyceroyl phosphate + ADP. It functions in the pathway carbohydrate degradation; glycolysis; pyruvate from D-glyceraldehyde 3-phosphate: step 2/5. The protein is Phosphoglycerate kinase of Pseudomonas putida (strain ATCC 700007 / DSM 6899 / JCM 31910 / BCRC 17059 / LMG 24140 / F1).